Reading from the N-terminus, the 476-residue chain is tRNA sulfurtransferase (476 aa).

The 103-residue stretch at 54–156 (AENDIPLSKV…GKDALIYDKI (103 aa)) folds into the THUMP domain. ATP contacts are provided by residues 174–175 (MV), lysine 256, glycine 278, and glutamine 287. The cysteines at positions 334 and 433 are disulfide-linked. The Rhodanese domain maps to 388-470 (NLEDAVFIDL…LSKQKGSVDE (83 aa)). Catalysis depends on cysteine 433, which acts as the Cysteine persulfide intermediate.

Belongs to the ThiI family.

Its subcellular location is the cytoplasm. The enzyme catalyses [ThiI sulfur-carrier protein]-S-sulfanyl-L-cysteine + a uridine in tRNA + 2 reduced [2Fe-2S]-[ferredoxin] + ATP + H(+) = [ThiI sulfur-carrier protein]-L-cysteine + a 4-thiouridine in tRNA + 2 oxidized [2Fe-2S]-[ferredoxin] + AMP + diphosphate. It catalyses the reaction [ThiS sulfur-carrier protein]-C-terminal Gly-Gly-AMP + S-sulfanyl-L-cysteinyl-[cysteine desulfurase] + AH2 = [ThiS sulfur-carrier protein]-C-terminal-Gly-aminoethanethioate + L-cysteinyl-[cysteine desulfurase] + A + AMP + 2 H(+). The protein operates within cofactor biosynthesis; thiamine diphosphate biosynthesis. Catalyzes the ATP-dependent transfer of a sulfur to tRNA to produce 4-thiouridine in position 8 of tRNAs, which functions as a near-UV photosensor. Also catalyzes the transfer of sulfur to the sulfur carrier protein ThiS, forming ThiS-thiocarboxylate. This is a step in the synthesis of thiazole, in the thiamine biosynthesis pathway. The sulfur is donated as persulfide by IscS. The chain is tRNA sulfurtransferase from Thermoplasma volcanium (strain ATCC 51530 / DSM 4299 / JCM 9571 / NBRC 15438 / GSS1).